A 780-amino-acid polypeptide reads, in one-letter code: Kojibiose phosphorylase (780 aa).

354–355 contacts substrate; it reads WD. E496 (proton donor) is an active-site residue. 608-609 contributes to the substrate binding site; sequence KQ.

The protein belongs to the glycosyl hydrolase 65 family.

It carries out the reaction kojibiose + phosphate = beta-D-glucose 1-phosphate + D-glucose. Functionally, catalyzes the reversible phosphorolysis of kojibiose into beta-D-glucose 1-phosphate (Glc1P) and D-glucose. In the reverse direction, uses Glc1P as acceptor to produce alpha-1,2-glucans up to a degree of polymerization of 6. The chain is Kojibiose phosphorylase from Halothermothrix orenii (strain H 168 / OCM 544 / DSM 9562).